We begin with the raw amino-acid sequence, 398 residues long: Small ribosomal subunit protein mS29 (398 aa).

A mitochondrion-targeting transit peptide spans 1–21 (MMLKGITRLISRIHKLDPGRF). The tract at residues 39 to 67 (QVPVESPRAISRTNENDPAKHGDQHEGQH) is disordered. The segment covering 52 to 66 (NENDPAKHGDQHEGQ) has biased composition (basic and acidic residues). Residues Met-100 and 128–135 (GEKGTGKT) each bind GTP. N6-acetyllysine occurs at positions 175 and 207.

Belongs to the mitochondrion-specific ribosomal protein mS29 family. As to quaternary structure, component of the mitochondrial small ribosomal subunit (mt-SSU). Mature mammalian 55S mitochondrial ribosomes consist of a small (28S) and a large (39S) subunit. The 28S small subunit contains a 12S ribosomal RNA (12S mt-rRNA) and 30 different proteins. The 39S large subunit contains a 16S rRNA (16S mt-rRNA), a copy of mitochondrial valine transfer RNA (mt-tRNA(Val)), which plays an integral structural role, and 52 different proteins. Interacts with DELE1. Interacts with NOA1. Ubiquitous.

The protein localises to the mitochondrion. It catalyses the reaction GTP + H2O = GDP + phosphate + H(+). Its function is as follows. As a component of the mitochondrial small ribosomal subunit, it plays a role in the translation of mitochondrial mRNAs. Involved in mediating interferon-gamma-induced cell death. Displays GTPase activity in vitro. The chain is Small ribosomal subunit protein mS29 from Homo sapiens (Human).